A 188-amino-acid chain; its full sequence is Nicotinamide-nucleotide adenylyltransferase (188 aa).

It belongs to the archaeal NMN adenylyltransferase family.

The protein resides in the cytoplasm. It carries out the reaction beta-nicotinamide D-ribonucleotide + ATP + H(+) = diphosphate + NAD(+). It participates in cofactor biosynthesis; NAD(+) biosynthesis; NAD(+) from nicotinamide D-ribonucleotide: step 1/1. The polypeptide is Nicotinamide-nucleotide adenylyltransferase (Thermococcus kodakarensis (strain ATCC BAA-918 / JCM 12380 / KOD1) (Pyrococcus kodakaraensis (strain KOD1))).